Here is a 390-residue protein sequence, read N- to C-terminus: Acetate kinase (390 aa).

Asparagine 10 provides a ligand contact to Mg(2+). ATP is bound at residue lysine 17. Arginine 89 is a substrate binding site. Aspartate 146 functions as the Proton donor/acceptor in the catalytic mechanism. ATP-binding positions include 204–208 (HLGNG), 278–280 (DMR), and 323–327 (GIGEN). Glutamate 376 serves as a coordination point for Mg(2+).

It belongs to the acetokinase family. In terms of assembly, homodimer. Mg(2+) is required as a cofactor. The cofactor is Mn(2+).

The protein resides in the cytoplasm. The catalysed reaction is acetate + ATP = acetyl phosphate + ADP. It participates in metabolic intermediate biosynthesis; acetyl-CoA biosynthesis; acetyl-CoA from acetate: step 1/2. In terms of biological role, catalyzes the formation of acetyl phosphate from acetate and ATP. Can also catalyze the reverse reaction. This Mycoplasma pneumoniae (strain ATCC 29342 / M129 / Subtype 1) (Mycoplasmoides pneumoniae) protein is Acetate kinase.